A 440-amino-acid polypeptide reads, in one-letter code: Nitrilase and fragile histidine triad fusion protein NitFhit (440 aa).

One can recognise a CN hydrolase domain in the interval 14–264 (RHFIAVCQMT…VDMCFAEIDL (251 aa)). Residues Glu-54, Lys-127, and Cys-169 contribute to the active site. The 109-residue stretch at 297–405 (GGLKFARFNI…LPRRAGDFGD (109 aa)) folds into the HIT domain. Residues 390–394 (HVHIH) carry the Histidine triad motif motif. His-392 acts as the Tele-AMP-histidine intermediate in catalysis.

It in the N-terminal section; belongs to the UPF0012 family. As to quaternary structure, homotetramer. Mn(2+) is required as a cofactor.

The catalysed reaction is P(1),P(3)-bis(5'-adenosyl) triphosphate + H2O = AMP + ADP + 2 H(+). In terms of biological role, cleaves A-5'-PPP-5'A to yield AMP and ADP. The polypeptide is Nitrilase and fragile histidine triad fusion protein NitFhit (Caenorhabditis elegans).